A 164-amino-acid chain; its full sequence is Aphid transmission protein (164 aa).

This sequence belongs to the caulimoviridae ORF II family.

This protein is involved in virus transmission. The protein is Aphid transmission protein of Scrophularia californica (California bee plant).